The sequence spans 155 residues: Small ribosomal subunit protein uS7 (155 aa).

It belongs to the universal ribosomal protein uS7 family. Part of the 30S ribosomal subunit. Contacts proteins S9 and S11.

One of the primary rRNA binding proteins, it binds directly to 16S rRNA where it nucleates assembly of the head domain of the 30S subunit. Is located at the subunit interface close to the decoding center, probably blocks exit of the E-site tRNA. The sequence is that of Small ribosomal subunit protein uS7 from Corynebacterium efficiens (strain DSM 44549 / YS-314 / AJ 12310 / JCM 11189 / NBRC 100395).